Here is a 75-residue protein sequence, read N- to C-terminus: OcyC3 (75 aa).

Positions 1–22 (MQYKTFLVISLAYLLVADEAAA) are cleaved as a signal peptide. The propeptide occupies 51-75 (EINNVFEPYHENLDLELERFLSQLQ).

Expressed by the venom gland.

It is found in the secreted. Its subcellular location is the target cell membrane. Functionally, amphipathic peptide with probable antimicrobial activity. May act by disrupting the integrity of the bacterial cell membrane. This chain is OcyC3, found in Opisthacanthus cayaporum (South American scorpion).